Reading from the N-terminus, the 216-residue chain is Small ribosomal subunit protein uS3c (216 aa).

Residues 43 to 118 (INNYVKKNMR…KLNITITRIE (76 aa)) enclose the KH type-2 domain.

It belongs to the universal ribosomal protein uS3 family. Part of the 30S ribosomal subunit.

Its subcellular location is the plastid. This chain is Small ribosomal subunit protein uS3c (rps3), found in Cuscuta reflexa (Southern Asian dodder).